We begin with the raw amino-acid sequence, 354 residues long: Thiamine thiazole synthase 1, chloroplastic (354 aa).

A chloroplast-targeting transit peptide spans 1–43 (MATTAASSLLKSSFAGSRLPSATRAPSSVVVSTGGAPRTAAIS). Residues Ala-96, 116-117 (EQ), Gly-124, and Val-190 contribute to the substrate site. Residue Cys-219 is modified to 2,3-didehydroalanine (Cys). Substrate is bound by residues Asp-221, His-236, Met-288, and 298 to 300 (RMG).

It belongs to the THI4 family. Homooctamer. It depends on Fe cation as a cofactor. Post-translationally, during the catalytic reaction, a sulfide is transferred from Cys-219 to a reaction intermediate, generating a dehydroalanine residue.

Its subcellular location is the plastid. It localises to the chloroplast. The enzyme catalyses [ADP-thiazole synthase]-L-cysteine + glycine + NAD(+) = [ADP-thiazole synthase]-dehydroalanine + ADP-5-ethyl-4-methylthiazole-2-carboxylate + nicotinamide + 3 H2O + 2 H(+). Its function is as follows. Involved in biosynthesis of the thiamine precursor thiazole. Catalyzes the conversion of NAD and glycine to adenosine diphosphate 5-(2-hydroxyethyl)-4-methylthiazole-2-carboxylic acid (ADT), an adenylated thiazole intermediate. The reaction includes an iron-dependent sulfide transfer from a conserved cysteine residue of the protein to a thiazole intermediate. The enzyme can only undergo a single turnover, which suggests it is a suicide enzyme. May have additional roles in adaptation to various stress conditions and in DNA damage tolerance. The protein is Thiamine thiazole synthase 1, chloroplastic of Sorghum bicolor (Sorghum).